The primary structure comprises 317 residues: High-affinity zinc uptake system protein ZnuA (317 aa).

The signal sequence occupies residues 1–31 (MNINIMLKNKKKKFFSILAILFILMPNNSYA). Cys259 and Cys313 are disulfide-bonded.

This sequence belongs to the bacterial solute-binding protein 9 family.

Its subcellular location is the periplasm. Functionally, part of the ATP-binding cassette (ABC) transport system ZnuABC involved in zinc import. Binds zinc with high affinity and specificity and delivers it to the membrane permease for translocation into the cytoplasm. This chain is High-affinity zinc uptake system protein ZnuA (znuA), found in Buchnera aphidicola subsp. Schizaphis graminum (strain Sg).